A 113-amino-acid polypeptide reads, in one-letter code: Putative membrane protein insertion efficiency factor (113 aa).

This sequence belongs to the UPF0161 family.

Its subcellular location is the cell inner membrane. Functionally, could be involved in insertion of integral membrane proteins into the membrane. The chain is Putative membrane protein insertion efficiency factor from Campylobacter jejuni subsp. jejuni serotype O:2 (strain ATCC 700819 / NCTC 11168).